The primary structure comprises 71 residues: Small ribosomal subunit protein bS21 (71 aa).

It belongs to the bacterial ribosomal protein bS21 family.

The sequence is that of Small ribosomal subunit protein bS21 from Nitrosococcus oceani (strain ATCC 19707 / BCRC 17464 / JCM 30415 / NCIMB 11848 / C-107).